A 107-amino-acid chain; its full sequence is Ubiquitin-related modifier 1 (107 aa).

At G107 the chain carries 1-thioglycine. Residue G107 forms a Glycyl lysine isopeptide (Gly-Lys) (interchain with K-? in acceptor proteins) linkage.

Belongs to the URM1 family. In terms of processing, C-terminal thiocarboxylation occurs in 2 steps, it is first acyl-adenylated (-COAMP) via the hesA/moeB/thiF part of UBA4, then thiocarboxylated (-COSH) via the rhodanese domain of UBA4.

Its subcellular location is the cytoplasm. It participates in tRNA modification; 5-methoxycarbonylmethyl-2-thiouridine-tRNA biosynthesis. Functionally, acts as a sulfur carrier required for 2-thiolation of mcm(5)S(2)U at tRNA wobble positions of cytosolic tRNA(Lys), tRNA(Glu) and tRNA(Gln). Serves as sulfur donor in tRNA 2-thiolation reaction by being thiocarboxylated (-COSH) at its C-terminus by the MOCS3 homolog UBA4. The sulfur is then transferred to tRNA to form 2-thiolation of mcm(5)S(2)U. Prior mcm(5) tRNA modification by the elongator complex is required for 2-thiolation. Also acts as a ubiquitin-like protein (UBL) that is covalently conjugated via an isopeptide bond to lysine residues of target proteins such as AHP1. The thiocarboxylated form serves as substrate for conjugation and oxidative stress specifically induces the formation of UBL-protein conjugates. The sequence is that of Ubiquitin-related modifier 1 from Mycosarcoma maydis (Corn smut fungus).